The primary structure comprises 101 residues: NAD(P)H-quinone oxidoreductase subunit 4L, chloroplastic (101 aa).

3 consecutive transmembrane segments (helical) span residues 2 to 22 (MFEH…YGLI), 32 to 52 (ICLE…SDLF), and 61 to 81 (IFAI…LSIL).

Belongs to the complex I subunit 4L family. In terms of assembly, NDH is composed of at least 16 different subunits, 5 of which are encoded in the nucleus.

It localises to the plastid. Its subcellular location is the chloroplast thylakoid membrane. The catalysed reaction is a plastoquinone + NADH + (n+1) H(+)(in) = a plastoquinol + NAD(+) + n H(+)(out). It carries out the reaction a plastoquinone + NADPH + (n+1) H(+)(in) = a plastoquinol + NADP(+) + n H(+)(out). Its function is as follows. NDH shuttles electrons from NAD(P)H:plastoquinone, via FMN and iron-sulfur (Fe-S) centers, to quinones in the photosynthetic chain and possibly in a chloroplast respiratory chain. The immediate electron acceptor for the enzyme in this species is believed to be plastoquinone. Couples the redox reaction to proton translocation, and thus conserves the redox energy in a proton gradient. The protein is NAD(P)H-quinone oxidoreductase subunit 4L, chloroplastic of Agrostis stolonifera (Creeping bentgrass).